The following is a 289-amino-acid chain: Deoxyuridine 5'-triphosphate nucleotidohydrolase (289 aa).

Substrate contacts are provided by residues 176–178 and 283–284; these read RSG and FG.

This sequence belongs to the dUTPase family. The cofactor is Mg(2+).

It carries out the reaction dUTP + H2O = dUMP + diphosphate + H(+). Involved in nucleotide metabolism: produces dUMP, the immediate precursor of thymidine nucleotides and decreases the intracellular concentration of dUTP to avoid uracil incorporation into viral DNA. The chain is Deoxyuridine 5'-triphosphate nucleotidohydrolase from Equus caballus (Horse).